Here is a 328-residue protein sequence, read N- to C-terminus: MLEDYYPSTTSYYHGGIDDDLYTAKWGMVMTFLDLNDSSLTPFEGTHFALIGFKSDKGVYINNGRVGAVESPAAIRTQLAKFPWHLGNQVMVYDVGNIDGPNRSLEQLQNSLSKAIKRMCDLNLKPIVLGGGHETAYGHYLGLRQSLSPSDDLAVINMDAHFDLRPYDQTGPNSGTGFRQMFDDAVADKRLFKYFVLGIQEHNNNLFLFDFVAKSKGIQFLTGQDIYQMGHQKICRAIDRFLEGQERVYLTIDMDCFSVGAAPGVSAIQSLGVDPNLAVLVLQHIAASGKLVGFDVVEVSPPHDIDNHTANLAATFIFYLVQIMAQHS.

Residues H133, D159, H161, D163, D253, and D255 each coordinate Mn(2+).

It belongs to the arginase family. It depends on Mn(2+) as a cofactor.

It catalyses the reaction N-formimidoyl-L-glutamate + H2O = formamide + L-glutamate. The protein operates within amino-acid degradation; L-histidine degradation into L-glutamate; L-glutamate from N-formimidoyl-L-glutamate (hydrolase route): step 1/1. Its function is as follows. Catalyzes the conversion of N-formimidoyl-L-glutamate to L-glutamate and formamide. This is Formimidoylglutamase from Streptococcus pyogenes serotype M6 (strain ATCC BAA-946 / MGAS10394).